The primary structure comprises 251 residues: Hydroxyacylglutathione hydrolase (251 aa).

Zn(2+) contacts are provided by histidine 53, histidine 55, aspartate 57, histidine 58, histidine 110, aspartate 127, and histidine 165.

Belongs to the metallo-beta-lactamase superfamily. Glyoxalase II family. As to quaternary structure, monomer. Zn(2+) is required as a cofactor.

The catalysed reaction is an S-(2-hydroxyacyl)glutathione + H2O = a 2-hydroxy carboxylate + glutathione + H(+). Its pathway is secondary metabolite metabolism; methylglyoxal degradation; (R)-lactate from methylglyoxal: step 2/2. Thiolesterase that catalyzes the hydrolysis of S-D-lactoyl-glutathione to form glutathione and D-lactic acid. This chain is Hydroxyacylglutathione hydrolase, found in Salmonella dublin (strain CT_02021853).